A 426-amino-acid polypeptide reads, in one-letter code: UDP-N-acetylglucosamine 1-carboxyvinyltransferase (426 aa).

Residue 22-23 coordinates phosphoenolpyruvate; it reads KN. UDP-N-acetyl-alpha-D-glucosamine is bound at residue arginine 93. Cysteine 117 serves as the catalytic Proton donor. The residue at position 117 (cysteine 117) is a 2-(S-cysteinyl)pyruvic acid O-phosphothioketal. UDP-N-acetyl-alpha-D-glucosamine contacts are provided by residues 162-165, aspartate 307, and isoleucine 329; that span reads KVSV.

It belongs to the EPSP synthase family. MurA subfamily.

It localises to the cytoplasm. It carries out the reaction phosphoenolpyruvate + UDP-N-acetyl-alpha-D-glucosamine = UDP-N-acetyl-3-O-(1-carboxyvinyl)-alpha-D-glucosamine + phosphate. It participates in cell wall biogenesis; peptidoglycan biosynthesis. Cell wall formation. Adds enolpyruvyl to UDP-N-acetylglucosamine. The polypeptide is UDP-N-acetylglucosamine 1-carboxyvinyltransferase (Haemophilus ducreyi (strain 35000HP / ATCC 700724)).